We begin with the raw amino-acid sequence, 353 residues long: Mitochondrial distribution and morphology protein 12 (353 aa).

One can recognise an SMP-LTD domain in the interval 1 to 330 (MSFDIKWENL…WPSWICLDMN (330 aa)). Acidic residues-rich tracts occupy residues 64–75 (DEFYEDTTDSPE), 84–103 (TGDDDDDDDDDEDDESDDDG), and 330–342 (NDDDEEEEEEENP). Disordered regions lie at residues 64-140 (DEFY…NRSR) and 330-353 (NDDDEEEEEEENPSESSSTTHVGS).

It belongs to the MDM12 family. Component of the ER-mitochondria encounter structure (ERMES) or MDM complex, composed of MMM1, MDM10, MDM12 and MDM34. An MMM1 homodimer associates with one molecule of MDM12 on each side in a pairwise head-to-tail manner, and the SMP-LTD domains of MMM1 and MDM12 generate a continuous hydrophobic tunnel for phospholipid trafficking.

Its subcellular location is the mitochondrion outer membrane. The protein resides in the endoplasmic reticulum membrane. Its function is as follows. Component of the ERMES/MDM complex, which serves as a molecular tether to connect the endoplasmic reticulum (ER) and mitochondria. Components of this complex are involved in the control of mitochondrial shape and protein biogenesis, and function in nonvesicular lipid trafficking between the ER and mitochondria. MDM12 is required for the interaction of the ER-resident membrane protein MMM1 and the outer mitochondrial membrane-resident beta-barrel protein MDM10. The MDM12-MMM1 subcomplex functions in the major beta-barrel assembly pathway that is responsible for biogenesis of all mitochondrial outer membrane beta-barrel proteins, and acts in a late step after the SAM complex. The MDM10-MDM12-MMM1 subcomplex further acts in the TOM40-specific pathway after the action of the MDM12-MMM1 complex. Essential for establishing and maintaining the structure of mitochondria and maintenance of mtDNA nucleoids. The protein is Mitochondrial distribution and morphology protein 12 of Candida tropicalis (strain ATCC MYA-3404 / T1) (Yeast).